The sequence spans 238 residues: 2-C-methyl-D-erythritol 4-phosphate cytidylyltransferase (238 aa).

It belongs to the IspD/TarI cytidylyltransferase family. IspD subfamily.

The enzyme catalyses 2-C-methyl-D-erythritol 4-phosphate + CTP + H(+) = 4-CDP-2-C-methyl-D-erythritol + diphosphate. The protein operates within isoprenoid biosynthesis; isopentenyl diphosphate biosynthesis via DXP pathway; isopentenyl diphosphate from 1-deoxy-D-xylulose 5-phosphate: step 2/6. Catalyzes the formation of 4-diphosphocytidyl-2-C-methyl-D-erythritol from CTP and 2-C-methyl-D-erythritol 4-phosphate (MEP). The polypeptide is 2-C-methyl-D-erythritol 4-phosphate cytidylyltransferase (Aliivibrio fischeri (strain ATCC 700601 / ES114) (Vibrio fischeri)).